The chain runs to 246 residues: Large ribosomal subunit protein uL4 (246 aa).

Residues 37-103 (AAQANRKQDY…TEKDRSLDLN (67 aa)) form a disordered region. The segment covering 92–103 (PKTEKDRSLDLN) has biased composition (basic and acidic residues).

Belongs to the universal ribosomal protein uL4 family. In terms of assembly, part of the 50S ribosomal subunit. Interacts weakly with proteins L18e, L24 and L37e. Has been cross-linked to L18e.

One of the primary rRNA binding proteins, this protein initially binds near the 5'-end of the 23S rRNA. It is important during the early stages of 50S assembly. Its function is as follows. Makes multiple contacts with different domains of the 23S rRNA in the assembled 50S subunit. In terms of biological role, forms part of the polypeptide exit tunnel, in which it helps forms a bend with protein L22. Contacts the macrolide antibiotic spiramycin in the polypeptide exit tunnel. This chain is Large ribosomal subunit protein uL4 (rpl4), found in Haloarcula marismortui (strain ATCC 43049 / DSM 3752 / JCM 8966 / VKM B-1809) (Halobacterium marismortui).